A 283-amino-acid polypeptide reads, in one-letter code: Acetylglutamate kinase (283 aa).

Substrate contacts are provided by residues 64–65 (GG), arginine 86, and asparagine 181.

This sequence belongs to the acetylglutamate kinase family. ArgB subfamily.

It is found in the cytoplasm. The enzyme catalyses N-acetyl-L-glutamate + ATP = N-acetyl-L-glutamyl 5-phosphate + ADP. It participates in amino-acid biosynthesis; L-arginine biosynthesis; N(2)-acetyl-L-ornithine from L-glutamate: step 2/4. Its function is as follows. Catalyzes the ATP-dependent phosphorylation of N-acetyl-L-glutamate. The chain is Acetylglutamate kinase from Sulfurimonas denitrificans (strain ATCC 33889 / DSM 1251) (Thiomicrospira denitrificans (strain ATCC 33889 / DSM 1251)).